We begin with the raw amino-acid sequence, 333 residues long: Cytosolic Fe-S cluster assembly factor NBP35 (333 aa).

[4Fe-4S] cluster-binding residues include Cys32, Cys46, Cys49, and Cys55. 85–92 is an ATP binding site; it reads GKGGVGKS. Residues Cys258 and Cys261 each coordinate [4Fe-4S] cluster.

This sequence belongs to the Mrp/NBP35 ATP-binding proteins family. NUBP1/NBP35 subfamily. As to quaternary structure, heterotetramer of 2 NBP35 and 2 CFD1 chains. The cofactor is [4Fe-4S] cluster.

It localises to the cytoplasm. Its subcellular location is the nucleus. Functionally, component of the cytosolic iron-sulfur (Fe/S) protein assembly (CIA) machinery. Required for maturation of extramitochondrial Fe-S proteins. The NBP35-CFD1 heterotetramer forms a Fe-S scaffold complex, mediating the de novo assembly of an Fe-S cluster and its transfer to target apoproteins. Required for biogenesis and export of both ribosomal subunits, which may reflect a role in assembly of the Fe/S clusters in RLI1, a protein which performs rRNA processing and ribosome export. The chain is Cytosolic Fe-S cluster assembly factor NBP35 from Eremothecium gossypii (strain ATCC 10895 / CBS 109.51 / FGSC 9923 / NRRL Y-1056) (Yeast).